The sequence spans 381 residues: Tryptophan--tRNA ligase (381 aa).

Positions 82–90 match the 'HIGH' region motif; it reads PSLGMHIGH. The 'KMSKS' region signature appears at 254-258; it reads KMSSS.

The protein belongs to the class-I aminoacyl-tRNA synthetase family.

Its subcellular location is the cytoplasm. It catalyses the reaction tRNA(Trp) + L-tryptophan + ATP = L-tryptophyl-tRNA(Trp) + AMP + diphosphate + H(+). In Sulfurisphaera tokodaii (strain DSM 16993 / JCM 10545 / NBRC 100140 / 7) (Sulfolobus tokodaii), this protein is Tryptophan--tRNA ligase.